The following is a 112-amino-acid chain: MSAAIQFTRGIDEPVVPDVRLTRSRDGQNGTATFYFDEPQALVGEVRQDITGMYLLDDEGELATREVKAKFINGQPAGLEAVYLMRSPEEWDRFMRFMQRYAEANGLGFTEA.

This sequence belongs to the Psb28 family. Part of the photosystem II complex.

It is found in the cellular thylakoid membrane. This chain is Photosystem II reaction center Psb28 protein, found in Synechococcus elongatus (strain ATCC 33912 / PCC 7942 / FACHB-805) (Anacystis nidulans R2).